A 583-amino-acid chain; its full sequence is MSSLSVRFLSPPLFSSTPAWPRTGLAATQAVPPVVAEVDAGRLEPRVEEREGYWVLKEKFREGINPQEKLKLEREPMKLFMEGGIEDLAKMSLEEIDKDKISKSDIDVRLKWLGLFHRRKHHYGRFMMRLKLPNGVTTSAQTRYLASVIRKYGKDGCADVTTRQNWQIRGVVLSDVPEILKGLDEVGLTSLQSGMDNVRNPVGNPLAGIDIHEIVATRPYNNLLSQFITANSRGNLAFTNLPRKWNVCVVGSHDLFEHPHINDLAYMPAIKDGRFGFNLLVGGFFSPRRCAEAVPLDAWVSADDIILVCKAILEAYRDLGTRGNRQKTRMMWLIDELGIEGFRSEVVKRMPNQELERAAPEDLIEKQWERRELIGVHPQKQEGLSYVGLHIPVGRVQADDMDELARLADTYGCGELRLTVEQNIIIPNIENSKLEALLGEPLLKDRFSPEPPILMKGLVACTGNQFCGQAIIETKARALKVTEEVQRQVAVTRPVRMHWTGCPNSCGQVQVADIGFMGCMARDENGKPCEGAAVFLGGRIGSDSHLGNLYKKGVPCKNLVPLVVDILVKHFGAVPREREESED.

The N-terminal 22 residues, 1 to 22 (MSSLSVRFLSPPLFSSTPAWPR), are a transit peptide targeting the chloroplast. Cysteine 461, cysteine 467, cysteine 502, and cysteine 506 together coordinate [4Fe-4S] cluster. Cysteine 506 contributes to the siroheme binding site.

It belongs to the nitrite and sulfite reductase 4Fe-4S domain family. As to quaternary structure, monomer. Siroheme serves as cofactor. [4Fe-4S] cluster is required as a cofactor.

It localises to the plastid. Its subcellular location is the chloroplast. The catalysed reaction is 6 oxidized [2Fe-2S]-[ferredoxin] + NH4(+) + 2 H2O = nitrite + 6 reduced [2Fe-2S]-[ferredoxin] + 8 H(+). It functions in the pathway nitrogen metabolism; nitrate reduction (assimilation). The polypeptide is Ferredoxin--nitrite reductase, chloroplastic (NIR1) (Betula pendula (European white birch)).